A 612-amino-acid chain; its full sequence is Mineralocorticoid receptor (612 aa).

A modulating region spans residues 1–228 (GNEIADSTVS…STGPSRPSKV (228 aa)). Residues C229, C232, C246, C249, C269, C275, C285, and C288 each contribute to the Zn(2+) site. 2 NR C4-type zinc fingers span residues 229–249 (CLVCGDEASGCHYGVVTCGSC) and 269–293 (CAGRNDCIIDKIRRKNCPACRLQKC). The nuclear receptor DNA-binding region spans 229 to 298 (CLVCGDEASG…RLQKCLQAGM (70 aa)). The segment at 299 to 349 (NLGARKSKKLGKLKGVHEEHPQQPLQQTPTASPKEDTTLTSSSKEPSANSN) is hinge. The tract at residues 310-348 (KLKGVHEEHPQQPLQQTPTASPKEDTTLTSSSKEPSANS) is disordered. The segment covering 339-348 (SSSKEPSANS) has biased composition (low complexity). The 243-residue stretch at 350–592 (SLVPLISAVS…EFPAMLVEII (243 aa)) folds into the NR LBD domain. 2 residues coordinate 21-hydroxyprogesterone: N398 and Q404. Residues N398 and Q404 each coordinate aldosterone. The progesterone site is built by N398 and Q404. The segment at 410 to 413 (KWAK) is important for coactivator binding. The 21-hydroxyprogesterone site is built by R445 and T573. Aldosterone contacts are provided by R445 and T573. Progesterone contacts are provided by R445 and T573.

The protein belongs to the nuclear hormone receptor family. NR3 subfamily.

It localises to the cytoplasm. The protein localises to the nucleus. Receptor for both mineralocorticoids (MC) such as aldosterone and glucocorticoids (GC) such as corticosterone or cortisol. Binds to mineralocorticoid response elements (MRE) and transactivates target genes. The effect of MC is to increase ion and water transport and thus raise extracellular fluid volume and blood pressure and lower potassium levels. This Xenopus laevis (African clawed frog) protein is Mineralocorticoid receptor (nr3c2).